A 311-amino-acid chain; its full sequence is tRNA-cytidine(32) 2-sulfurtransferase (311 aa).

The PP-loop motif motif lies at 47–52 (SGGKDS). Residues Cys122, Cys125, and Cys213 each coordinate [4Fe-4S] cluster.

It belongs to the TtcA family. In terms of assembly, homodimer. The cofactor is Mg(2+). [4Fe-4S] cluster serves as cofactor.

The protein resides in the cytoplasm. It catalyses the reaction cytidine(32) in tRNA + S-sulfanyl-L-cysteinyl-[cysteine desulfurase] + AH2 + ATP = 2-thiocytidine(32) in tRNA + L-cysteinyl-[cysteine desulfurase] + A + AMP + diphosphate + H(+). It functions in the pathway tRNA modification. In terms of biological role, catalyzes the ATP-dependent 2-thiolation of cytidine in position 32 of tRNA, to form 2-thiocytidine (s(2)C32). The sulfur atoms are provided by the cysteine/cysteine desulfurase (IscS) system. The sequence is that of tRNA-cytidine(32) 2-sulfurtransferase from Escherichia coli O7:K1 (strain IAI39 / ExPEC).